The sequence spans 184 residues: ATP synthase subunit delta (184 aa).

This sequence belongs to the ATPase delta chain family. As to quaternary structure, F-type ATPases have 2 components, F(1) - the catalytic core - and F(0) - the membrane proton channel. F(1) has five subunits: alpha(3), beta(3), gamma(1), delta(1), epsilon(1). F(0) has three main subunits: a(1), b(2) and c(10-14). The alpha and beta chains form an alternating ring which encloses part of the gamma chain. F(1) is attached to F(0) by a central stalk formed by the gamma and epsilon chains, while a peripheral stalk is formed by the delta and b chains.

Its subcellular location is the cell membrane. Functionally, f(1)F(0) ATP synthase produces ATP from ADP in the presence of a proton or sodium gradient. F-type ATPases consist of two structural domains, F(1) containing the extramembraneous catalytic core and F(0) containing the membrane proton channel, linked together by a central stalk and a peripheral stalk. During catalysis, ATP synthesis in the catalytic domain of F(1) is coupled via a rotary mechanism of the central stalk subunits to proton translocation. This protein is part of the stalk that links CF(0) to CF(1). It either transmits conformational changes from CF(0) to CF(1) or is implicated in proton conduction. This is ATP synthase subunit delta from Christiangramia forsetii (strain DSM 17595 / CGMCC 1.15422 / KT0803) (Gramella forsetii).